The primary structure comprises 350 residues: Phosphotriesterase-related protein (350 aa).

A divalent metal cation contacts are provided by His-22, His-24, Glu-169, His-201, His-230, and Asp-298.

Belongs to the metallo-dependent hydrolases superfamily. Phosphotriesterase family. It depends on a divalent metal cation as a cofactor.

The polypeptide is Phosphotriesterase-related protein (Drosophila yakuba (Fruit fly)).